A 236-amino-acid polypeptide reads, in one-letter code: Purine nucleoside phosphorylase DeoD-type (236 aa).

His-4 contacts a purine D-ribonucleoside. Phosphate contacts are provided by residues Gly-20, Arg-24, Arg-43, and 87-90 (RVGT). Residues 179–181 (EME) and 203–204 (SD) each bind a purine D-ribonucleoside. Asp-204 (proton donor) is an active-site residue.

The protein belongs to the PNP/UDP phosphorylase family. Homohexamer; trimer of homodimers.

The catalysed reaction is a purine D-ribonucleoside + phosphate = a purine nucleobase + alpha-D-ribose 1-phosphate. The enzyme catalyses a purine 2'-deoxy-D-ribonucleoside + phosphate = a purine nucleobase + 2-deoxy-alpha-D-ribose 1-phosphate. Its function is as follows. Catalyzes the reversible phosphorolytic breakdown of the N-glycosidic bond in the beta-(deoxy)ribonucleoside molecules, with the formation of the corresponding free purine bases and pentose-1-phosphate. This is Purine nucleoside phosphorylase DeoD-type from Streptococcus pneumoniae serotype 2 (strain D39 / NCTC 7466).